A 452-amino-acid chain; its full sequence is Disintegrin and metalloproteinase domain-containing protein 11 (452 aa).

The Peptidase M12B domain occupies 1-120; it reads RRHHSPLLVS…GGGSCLFNKP (120 aa). The Extracellular segment spans residues 1–417; it reads RRHHSPLLVS…EKYKGPSGTN (417 aa). 3 disulfides stabilise this stretch: Cys-31/Cys-115, Cys-74/Cys-99, and Cys-76/Cys-83. One can recognise a Disintegrin domain in the interval 126–214; that stretch reads PPSCGNGFIE…ACPANLHKQD (89 aa). Asn-149 is a glycosylation site (N-linked (GlcNAc...) asparagine). Cysteines 186 and 206 form a disulfide. N-linked (GlcNAc...) asparagine glycans are attached at residues Asn-288 and Asn-356. Disulfide bonds link Cys-360-Cys-375, Cys-369-Cys-381, and Cys-383-Cys-392. Residues 360–416 enclose the EGF-like domain; that stretch reads CPGSWNGVICSDHGVCSNEGKCICHPEWTGKDCSVYDPLPVPKPTGVVEKYKGPSGT. Residues 418–438 traverse the membrane as a helical segment; it reads IIIGSIAGAVLIAAIVLGGTG. The Cytoplasmic portion of the chain corresponds to 439–452; it reads WGFKNIRRGRSGGG.

In terms of processing, the precursor is cleaved by a furin endopeptidase. As to expression, detected in testis and barely expressed in heart and muscle. Not detectable in liver.

The protein resides in the presynaptic cell membrane. The protein localises to the perikaryon. It localises to the cell projection. It is found in the axon. In terms of biological role, probable ligand for integrin in the brain. This is a non-catalytic metalloprotease-like protein. The protein is Disintegrin and metalloproteinase domain-containing protein 11 (adam11) of Xenopus laevis (African clawed frog).